A 487-amino-acid chain; its full sequence is L-tartrate/succinate antiporter (487 aa).

14 helical membrane passes run 10–30, 33–53, 54–74, 93–113, 137–157, 189–209, 236–256, 292–312, 313–333, 340–360, 370–390, 393–413, 418–438, and 462–482; these read YLAPLAVIAIIALLPLPAGLE, TWLYFAVFTGVIVGLILEPVP, GAVVAMVGISIIAILSPWLLF, WAVSGFSNSVIWLIFAAFMFG, TLFLGYAVMFSELILAPVTPS, IGSYIMWMGIVADCVTSAIFL, FLGMLPLSILLVLLVPWLAYV, LMVGALVLWIFGGDYIDAAMV, GYSVVALMLLLRIICWDDIVS, VFFWLASLITLATGLNNTGFI, SLSGYSPTIVMVALIVVFYLL, FFASATAYTSALAPMMIAAAL, IPLPVFCLMVGAAIGLGSILT, and LGAIFGLIFLVLLVITGLLWM.

Belongs to the SLC13A/DASS transporter (TC 2.A.47) family. DIT1 subfamily.

The protein localises to the cell inner membrane. It carries out the reaction (2R,3R)-tartrate(out) + succinate(in) = (2R,3R)-tartrate(in) + succinate(out). In terms of biological role, catalyzes the uptake of tartrate in exchange for intracellular succinate. Essential for anaerobic L-tartrate fermentation. This chain is L-tartrate/succinate antiporter (ttdT), found in Escherichia coli O6:H1 (strain CFT073 / ATCC 700928 / UPEC).